The primary structure comprises 188 residues: Putative manganese efflux pump MntP (188 aa).

6 helical membrane passes run 3–23 (LSATILLAFGMSMDAFAASIG), 41–61 (LIFGAIETLTPLVGWGLGMLA), 62–82 (SQFILEWNHWIAFILLVFLGG), 107–129 (LLVTTAFATSLDAMAVGVGLAFL), 143–163 (ATFIMSTLGMMVGRFIGPLLG), and 168–188 (ILGGIVLIGIGSEILWSHFAG).

Belongs to the MntP (TC 9.B.29) family.

It is found in the cell inner membrane. Functionally, probably functions as a manganese efflux pump. The chain is Putative manganese efflux pump MntP from Klebsiella pneumoniae subsp. pneumoniae (strain ATCC 700721 / MGH 78578).